Consider the following 702-residue polypeptide: Dissimilatory sulfite reductase MccA (702 aa).

The signal sequence occupies residues 1–39 (MLSGWSVLKGGNMKYWDKALLSLFMCVSTLSIAATHAVA). The heme c site is built by Cys155, Cys158, His159, and His171. The substrate site is built by Lys220 and Tyr297. Positions 314, 317, 318, 351, 354, 355, 360, 372, 375, and 376 each coordinate heme c. Arg378 serves as a coordination point for substrate. Cys411 serves as a coordination point for Cu(+). Positions 423, 430, 433, 434, 437, 474, 477, 478, 491, 496, 499, and 500 each coordinate heme c. Cys507 contributes to the Cu(+) binding site. Heme c contacts are provided by His528, Cys574, Cys590, His591, and His675.

The protein belongs to the multiheme cytochrome c family. In terms of assembly, homotrimer. Cu(+) serves as cofactor. Requires heme c as cofactor.

Its subcellular location is the periplasm. It carries out the reaction [protein]-disulfide + hydrogen sulfide + 2 A + 3 H2O = [protein]-dithiol + sulfite + 2 AH2 + H(+). The protein operates within sulfur metabolism; sulfite reduction. Respiratory sulfite reductase that catalyzes the reduction of sulfite to sulfide in a single step, consuming six electrons in the process. Required for sulfite respiration under anaerobic growth conditions. Has only marginal activity with nitrite. This is Dissimilatory sulfite reductase MccA from Wolinella succinogenes (strain ATCC 29543 / DSM 1740 / CCUG 13145 / JCM 31913 / LMG 7466 / NCTC 11488 / FDC 602W) (Vibrio succinogenes).